Here is a 745-residue protein sequence, read N- to C-terminus: Serine/threonine-protein kinase GG21441 (745 aa).

Positions 49–73 are disordered; that stretch reads RNQQQNVQKDFDSHNRDCDSPVSST. The segment covering 57–67 has biased composition (basic and acidic residues); the sequence is KDFDSHNRDCD. Doublecortin domains are found at residues 159 to 245 and 315 to 398; these read LRIK…VEYN and RIVT…AEDF. Residues 479–737 enclose the Protein kinase domain; sequence YTLGRIIGDG…SEDILDHYWT (259 aa). ATP-binding positions include 485-493 and Lys508; that span reads IGDGNFAIV. Asp600 serves as the catalytic Proton acceptor.

This sequence belongs to the protein kinase superfamily. CAMK Ser/Thr protein kinase family. CaMK subfamily.

The enzyme catalyses L-seryl-[protein] + ATP = O-phospho-L-seryl-[protein] + ADP + H(+). The catalysed reaction is L-threonyl-[protein] + ATP = O-phospho-L-threonyl-[protein] + ADP + H(+). This is Serine/threonine-protein kinase GG21441 from Drosophila erecta (Fruit fly).